The primary structure comprises 947 residues: MTPLSSPLSQYWQTIVERLPEGFTETSLSVQAKSVLTFSDFALDSVIAHPEWLAELESASPQADEWRHYAGWLQEALAGVCDDASLMRELRFFRRRIMVRIAWAQTLSLVDDETILQQLSHLAETLIVGARDWLYAACCREWGTPCNPQGVPQPLLILGMGKLGGGELNFSSDIDLIFAWPEHGETRGGRRELDNAQFFTRLGQRLIKALDQPTMDGFVYRVDMRLRPFGDSGPLVLSFAALEDYYQEQGRDWERYAMVKARLMGDNDDAWSRELRAMLRPFVFRRYIDFSVIQSLRNMKGMIAREVRRRGLKDNIKLGAGGIREIEFIVQVFQLIRGGREPSLQSRSLLPTLDAIAALHLLPENDVAQLRVAYLFLRRLENLLQSINDEQTQTLPADDLNRARLAWGMKAENWPQLVGELTDHMANVRRVFNELIGDDEADTPQEEERSEPWREVWQDALQEDDSTPVLAHLADEDRRQVLTLIADFRKELDKRPIGPRGRQVLDQLMPHLLADVCSREDAAVTLSRITPLLAGIVTRTTYLELLSEFPGALKHLIMLCAASPMIASQLARYPLLLDELLDPGTLYQPTATDAYRDELRQYLLRVPEEDEEQQLEALRQFKQAQLLRIAAADIAGTLPVMKVSDHLTWLAEAMIDAVVQQAWTQMVARYGQPAHLDERQGRGFAVVGYGKLGGWELGYSSDLDLIFLHDCPMDVMTNGEREIDGRQFYLRLAQRIMHLFSTRTSSGILYEVDARLRPSGAAGMLVTSADAFADYQQHEAWTWEHQALVRARVVYGDPQLTSQFDTVRRTIMTTARDGKTLQTEVREMREKMRAHLGNKHRDRFDIKADEGGITDIEFIAQYLVLRYAHEKPKLTRWSDNVRILELLAQNGIMDEHEAQALTVAYTTLRDELHHLALQELPGHVAQTCFSKERALVQASWRKWLVAV.

The adenylyl removase stretch occupies residues 1-440 (MTPLSSPLSQ…VFNELIGDDE (440 aa)). Positions 450–947 (SEPWREVWQD…ASWRKWLVAV (498 aa)) are adenylyl transferase.

This sequence belongs to the GlnE family. Requires Mg(2+) as cofactor.

The catalysed reaction is [glutamine synthetase]-O(4)-(5'-adenylyl)-L-tyrosine + phosphate = [glutamine synthetase]-L-tyrosine + ADP. It catalyses the reaction [glutamine synthetase]-L-tyrosine + ATP = [glutamine synthetase]-O(4)-(5'-adenylyl)-L-tyrosine + diphosphate. Functionally, involved in the regulation of glutamine synthetase GlnA, a key enzyme in the process to assimilate ammonia. When cellular nitrogen levels are high, the C-terminal adenylyl transferase (AT) inactivates GlnA by covalent transfer of an adenylyl group from ATP to specific tyrosine residue of GlnA, thus reducing its activity. Conversely, when nitrogen levels are low, the N-terminal adenylyl removase (AR) activates GlnA by removing the adenylyl group by phosphorolysis, increasing its activity. The regulatory region of GlnE binds the signal transduction protein PII (GlnB) which indicates the nitrogen status of the cell. The polypeptide is Bifunctional glutamine synthetase adenylyltransferase/adenylyl-removing enzyme (Salmonella enteritidis PT4 (strain P125109)).